The following is a 1168-amino-acid chain: Protein VARIATION IN COMPOUND TRIGGERED ROOT growth response (1168 aa).

The region spanning tryptophan 10–leucine 171 is the TIR domain. Glutamate 85 is a catalytic residue. Residues glutamate 187–arginine 452 enclose the NB-ARC domain. LRR repeat units follow at residues threonine 539 to aspartate 562, leucine 606 to phenylalanine 629, cysteine 631 to threonine 653, leucine 676 to leucine 699, serine 701 to alanine 720, threonine 721 to asparagine 744, leucine 795 to serine 820, serine 839 to leucine 865, cysteine 873 to asparagine 896, and asparagine 1065 to serine 1089.

It belongs to the disease resistance NB-LRR family. Part of a nuclear protein complex made of VICTR, PAD4 and EDS1. Interacts (via TIR domain) with PAD4 and EDS1.

It is found in the cytoplasm. The protein resides in the nucleus. It catalyses the reaction NAD(+) + H2O = ADP-D-ribose + nicotinamide + H(+). In terms of biological role, disease resistance protein of the TIR-NB-LRR-type. Part of the RPS6 locus that contains a cluster of several paralogous disease resistance (R) genes. Resistance proteins guard the plant against pathogens that contain an appropriate avirulence protein via an indirect interaction with this avirulence protein. That triggers a defense system including the hypersensitive response, which restricts the pathogen growth. Required for [5-(3,4-dichlorophenyl)furan-2-yl]-piperidine-1-ylmethanethione-(DFPM-) induced root growth arrest due to reduced number of meristem cells in the division zone of the primary root and inhibition of abscisic acid- (ABA-) induced stomatal closing. The chain is Protein VARIATION IN COMPOUND TRIGGERED ROOT growth response (VICTR) from Arabidopsis thaliana (Mouse-ear cress).